A 639-amino-acid chain; its full sequence is Ubiquitin-like modifier-activating enzyme ATG7 (639 aa).

The GXGXXG motif signature appears at G322–G327. C502 acts as the Glycyl thioester intermediate in catalysis.

It belongs to the ATG7 family. Homodimer.

Its subcellular location is the cytoplasm. It is found in the preautophagosomal structure. Its function is as follows. E1-like activating enzyme involved in the 2 ubiquitin-like systems required for cytoplasm to vacuole transport (Cvt) and autophagy. Activates ATG12 for its conjugation with ATG5 and ATG8 for its conjugation with phosphatidylethanolamine. Both systems are needed for the ATG8 association to Cvt vesicles and autophagosomes membranes. Autophagy is essential for maintenance of amino acid levels and protein synthesis under nitrogen starvation. Required for selective autophagic degradation of the nucleus (nucleophagy) as well as for mitophagy which contributes to regulate mitochondrial quantity and quality by eliminating the mitochondria to a basal level to fulfill cellular energy requirements and preventing excess ROS production. Plays a role in the regulation of filamentous growth and chronological longevity. In Candida albicans (strain SC5314 / ATCC MYA-2876) (Yeast), this protein is Ubiquitin-like modifier-activating enzyme ATG7 (APG7).